Consider the following 260-residue polypeptide: MSRKKTPKSKGGSEPATSTLPAAAAATNGPRLAHPRTVRPGPEAPPNGPPQSIRPSLGSTGDFYDVAFKVMLVGDSGVGKTCLLVRFKDGAFLAGTFISTVGIDFRNKVLDVDGMKVKLQIWDTAGQERFRSVTHAYYRDAHALLLLYDITNKDSFDNIQAWLTEIQEYAQQDVVLMLLGNKVDSTQDRVVKREDGEKLAKEYGLPFMETSARTGLNVDLAFTAIAKELKQRSAKAPSEPRFRLHDYVKREGRGVSCCRL.

The interval 1 to 56 (MSRKKTPKSKGGSEPATSTLPAAAAATNGPRLAHPRTVRPGPEAPPNGPPQSIRPS) is disordered. Residues S76, G77, V78, G79, K80, T81, C82, S99, and T100 each coordinate GTP. Residue T81 coordinates Mg(2+). 2 short sequence motifs (switch) span residues 90–105 (GAFL…GIDF) and 123–140 (DTAG…YYRD). Mg(2+) contacts are provided by T100 and D123. GTP-binding residues include G126, N181, K182, D184, A212, and R213. Residues C257 and C258 are each lipidated (S-geranylgeranyl cysteine).

Belongs to the small GTPase superfamily. Rab family. Interacts with ADRA2B. Interacts with RIMS1. Mg(2+) serves as cofactor. Detected in zymogenic cells in the stomach.

The protein localises to the cytoplasmic vesicle. It is found in the secretory vesicle membrane. Its subcellular location is the golgi apparatus membrane. It catalyses the reaction GTP + H2O = GDP + phosphate + H(+). With respect to regulation, regulated by guanine nucleotide exchange factors (GEFs) which promote the exchange of bound GDP for free GTP. Regulated by GTPase activating proteins (GAPs) which increase the GTP hydrolysis activity. Inhibited by GDP dissociation inhibitors (GDIs). Its function is as follows. The small GTPases Rab are key regulators of intracellular membrane trafficking, from the formation of transport vesicles to their fusion with membranes. Rabs cycle between an inactive GDP-bound form and an active GTP-bound form that is able to recruit to membranes different set of downstream effectors directly responsible for vesicle formation, movement, tethering and fusion. RAB26 mediates transport of ADRA2A and ADRA2B from the Golgi to the cell membrane. Plays a role in the maturation of zymogenic granules and in pepsinogen secretion in the stomach. Plays a role in the secretion of amylase from acinar granules in the parotid gland. The sequence is that of Ras-related protein Rab-26 from Mus musculus (Mouse).